The sequence spans 231 residues: 7-cyano-7-deazaguanine synthase (231 aa).

Residue Phe-8–Leu-18 coordinates ATP. Positions 188, 197, 200, and 203 each coordinate Zn(2+).

Belongs to the QueC family. It depends on Zn(2+) as a cofactor.

The catalysed reaction is 7-carboxy-7-deazaguanine + NH4(+) + ATP = 7-cyano-7-deazaguanine + ADP + phosphate + H2O + H(+). Its pathway is purine metabolism; 7-cyano-7-deazaguanine biosynthesis. Functionally, catalyzes the ATP-dependent conversion of 7-carboxy-7-deazaguanine (CDG) to 7-cyano-7-deazaguanine (preQ(0)). This chain is 7-cyano-7-deazaguanine synthase, found in Escherichia coli (strain SMS-3-5 / SECEC).